The sequence spans 525 residues: GMP synthase [glutamine-hydrolyzing] (525 aa).

One can recognise a Glutamine amidotransferase type-1 domain in the interval 9-207; that stretch reads RILILDFGSQ…VRDICQCEAL (199 aa). Catalysis depends on Cys86, which acts as the Nucleophile. Active-site residues include His181 and Glu183. Residues 208–400 enclose the GMPS ATP-PPase domain; the sequence is WTPAKIIDDA…LGLPYDMLYR (193 aa). ATP is bound at residue 235-241; it reads SGGVDSS.

In terms of assembly, homodimer.

The enzyme catalyses XMP + L-glutamine + ATP + H2O = GMP + L-glutamate + AMP + diphosphate + 2 H(+). The protein operates within purine metabolism; GMP biosynthesis; GMP from XMP (L-Gln route): step 1/1. Functionally, catalyzes the synthesis of GMP from XMP. The sequence is that of GMP synthase [glutamine-hydrolyzing] from Shigella boydii serotype 18 (strain CDC 3083-94 / BS512).